A 796-amino-acid polypeptide reads, in one-letter code: Kinesin-like protein KIF3C (796 aa).

The Kinesin motor domain maps to 10–367 (ALKVVARCRP…LRFANRAKNI (358 aa)). An ATP-binding site is contributed by 97-104 (GQTGTGKT). Disordered regions lie at residues 252–292 (RQNK…PKEA), 397–422 (EKKG…APAG), and 758–796 (KVRK…VDHD). The span at 256-269 (AGPNAAGGPATQPT) shows a compositional bias: low complexity. The stretch at 378–632 (KDTLLREFQE…NEQTRELKLK (255 aa)) forms a coiled coil. Basic residues predominate over residues 401–416 (MLGKRPRRKSSRRKKA). Residues 633-793 (YLIIENFIPP…SVPLHPATVV (161 aa)) are globular.

It belongs to the TRAFAC class myosin-kinesin ATPase superfamily. Kinesin family. Kinesin II subfamily. Heterodimer of KIF3A and KIF3C.

It localises to the cytoplasm. It is found in the cytoskeleton. In terms of biological role, microtubule-based anterograde translocator for membranous organelles. This chain is Kinesin-like protein KIF3C (Kif3c), found in Mus musculus (Mouse).